We begin with the raw amino-acid sequence, 71 residues long: Antimicrobial peptide VpCT4 (71 aa).

Residues 1 to 23 form the signal peptide; the sequence is MKTQFVILIVAIVILQLISQSEA. At Leu-39 the chain carries Leucine amide. Residues 40–71 constitute a propeptide that is removed on maturation; it reads GKRGVQNMDQFDDIFEPELSEADLRYLQDLLR.

It belongs to the non-disulfide-bridged peptide (NDBP) superfamily. Short antimicrobial peptide (group 4) family. As to expression, expressed by the venom gland.

It localises to the secreted. The protein localises to the target cell membrane. Antimicrobial peptide with potent activity against bacteria S.aureus (MIC=9.3 uM), weak activity against E.coli (MIC&gt;100 uM), and weak activity against pathogenic yeasts C.albicans (MIC=100 uM) and C.glabrata (MIC=100 uM). Is not very effective against P.aeruginosa (MIC&gt;300 uM). Also provokes high hemolysis on human erythrocytes (HC(50)=4.8 uM). The sequence is that of Antimicrobial peptide VpCT4 from Mesomexovis punctatus (Scorpion).